A 135-amino-acid chain; its full sequence is DNA-binding protein inhibitor ID-2-B (135 aa).

The bHLH domain maps to A23 to L75. The Nuclear export signal signature appears at L108–L117.

In terms of assembly, heterodimer with other HLH proteins.

It localises to the cytoplasm. The protein localises to the nucleus. In terms of biological role, transcriptional regulator (lacking a basic DNA binding domain) which negatively regulates the basic helix-loop-helix (bHLH) transcription factors by forming heterodimers and inhibiting their DNA binding and transcriptional activity. Inhibits the activity of both neurogenic (neurod1/neuroD) and myogenic (myod1/myoD) bHLH factors. May play a role in the regulation of the circadian clock. The protein is DNA-binding protein inhibitor ID-2-B (id2-b) of Xenopus laevis (African clawed frog).